We begin with the raw amino-acid sequence, 397 residues long: Acetate kinase (397 aa).

Asn-8 contacts Mg(2+). Residue Lys-15 participates in ATP binding. A substrate-binding site is contributed by Arg-89. The Proton donor/acceptor role is filled by Asp-146. ATP is bound by residues 206–210 (HVGNG), 283–285 (DMR), and 331–335 (GMGEN). Glu-383 provides a ligand contact to Mg(2+).

The protein belongs to the acetokinase family. In terms of assembly, homodimer. The cofactor is Mg(2+). It depends on Mn(2+) as a cofactor.

It localises to the cytoplasm. The enzyme catalyses acetate + ATP = acetyl phosphate + ADP. It participates in metabolic intermediate biosynthesis; acetyl-CoA biosynthesis; acetyl-CoA from acetate: step 1/2. Functionally, catalyzes the formation of acetyl phosphate from acetate and ATP. Can also catalyze the reverse reaction. The chain is Acetate kinase from Streptococcus agalactiae serotype Ia (strain ATCC 27591 / A909 / CDC SS700).